Here is an 862-residue protein sequence, read N- to C-terminus: Kinesin-like protein KIN-7E (862 aa).

Residues 24-346 (KILVLVRLRP…LLFACCAKEV (323 aa)) enclose the Kinesin motor domain. Residue 110–117 (GQTSSGKT) coordinates ATP. The stretch at 355–428 (VMSDKALVKQ…RLEDFMKMVE (74 aa)) forms a coiled coil. 2 disordered regions span residues 463–505 (RTSF…QSEE) and 542–632 (ANGE…TPLV). Over residues 465-476 (SFISDGTSTPLS) the composition is skewed to polar residues. A compositionally biased stretch (basic and acidic residues) spans 494–505 (MSPRHSGDQSEE). Residues 612 to 621 (DSMTSRGSDS) are compositionally biased toward polar residues. Lys734 is covalently cross-linked (Glycyl lysine isopeptide (Lys-Gly) (interchain with G-Cter in ubiquitin)).

It belongs to the TRAFAC class myosin-kinesin ATPase superfamily. Kinesin family. KIN-7 subfamily.

The sequence is that of Kinesin-like protein KIN-7E from Arabidopsis thaliana (Mouse-ear cress).